Consider the following 78-residue polypeptide: Acyl carrier protein (78 aa).

Positions 2-77 (SDIADRVKKI…DAIKFLEKNS (76 aa)) constitute a Carrier domain. At Ser37 the chain carries O-(pantetheine 4'-phosphoryl)serine.

Belongs to the acyl carrier protein (ACP) family. In terms of processing, 4'-phosphopantetheine is transferred from CoA to a specific serine of apo-ACP by AcpS. This modification is essential for activity because fatty acids are bound in thioester linkage to the sulfhydryl of the prosthetic group.

Its subcellular location is the cytoplasm. The protein operates within lipid metabolism; fatty acid biosynthesis. In terms of biological role, carrier of the growing fatty acid chain in fatty acid biosynthesis. The protein is Acyl carrier protein of Methylobacterium sp. (strain 4-46).